The primary structure comprises 234 residues: Sugar fermentation stimulation protein homolog (234 aa).

Belongs to the SfsA family.

The protein is Sugar fermentation stimulation protein homolog of Shewanella piezotolerans (strain WP3 / JCM 13877).